A 315-amino-acid chain; its full sequence is 4-hydroxy-3-methylbut-2-enyl diphosphate reductase (315 aa).

Cys12 provides a ligand contact to [4Fe-4S] cluster. (2E)-4-hydroxy-3-methylbut-2-enyl diphosphate is bound by residues His41 and His74. 2 residues coordinate dimethylallyl diphosphate: His41 and His74. Isopentenyl diphosphate contacts are provided by His41 and His74. A [4Fe-4S] cluster-binding site is contributed by Cys96. His124 serves as a coordination point for (2E)-4-hydroxy-3-methylbut-2-enyl diphosphate. His124 is a dimethylallyl diphosphate binding site. Residue His124 coordinates isopentenyl diphosphate. Residue Glu126 is the Proton donor of the active site. Thr168 is a binding site for (2E)-4-hydroxy-3-methylbut-2-enyl diphosphate. Cys198 contributes to the [4Fe-4S] cluster binding site. (2E)-4-hydroxy-3-methylbut-2-enyl diphosphate contacts are provided by Ser226, Ser227, Asn228, and Ser270. Dimethylallyl diphosphate-binding residues include Ser226, Ser227, Asn228, and Ser270. 4 residues coordinate isopentenyl diphosphate: Ser226, Ser227, Asn228, and Ser270.

The protein belongs to the IspH family. It depends on [4Fe-4S] cluster as a cofactor.

The enzyme catalyses isopentenyl diphosphate + 2 oxidized [2Fe-2S]-[ferredoxin] + H2O = (2E)-4-hydroxy-3-methylbut-2-enyl diphosphate + 2 reduced [2Fe-2S]-[ferredoxin] + 2 H(+). It catalyses the reaction dimethylallyl diphosphate + 2 oxidized [2Fe-2S]-[ferredoxin] + H2O = (2E)-4-hydroxy-3-methylbut-2-enyl diphosphate + 2 reduced [2Fe-2S]-[ferredoxin] + 2 H(+). Its pathway is isoprenoid biosynthesis; dimethylallyl diphosphate biosynthesis; dimethylallyl diphosphate from (2E)-4-hydroxy-3-methylbutenyl diphosphate: step 1/1. The protein operates within isoprenoid biosynthesis; isopentenyl diphosphate biosynthesis via DXP pathway; isopentenyl diphosphate from 1-deoxy-D-xylulose 5-phosphate: step 6/6. In terms of biological role, catalyzes the conversion of 1-hydroxy-2-methyl-2-(E)-butenyl 4-diphosphate (HMBPP) into a mixture of isopentenyl diphosphate (IPP) and dimethylallyl diphosphate (DMAPP). Acts in the terminal step of the DOXP/MEP pathway for isoprenoid precursor biosynthesis. In Pseudomonas putida (strain W619), this protein is 4-hydroxy-3-methylbut-2-enyl diphosphate reductase.